The chain runs to 345 residues: Phosphoribosylformylglycinamidine cyclo-ligase (345 aa).

It belongs to the AIR synthase family.

It is found in the cytoplasm. It catalyses the reaction 2-formamido-N(1)-(5-O-phospho-beta-D-ribosyl)acetamidine + ATP = 5-amino-1-(5-phospho-beta-D-ribosyl)imidazole + ADP + phosphate + H(+). It participates in purine metabolism; IMP biosynthesis via de novo pathway; 5-amino-1-(5-phospho-D-ribosyl)imidazole from N(2)-formyl-N(1)-(5-phospho-D-ribosyl)glycinamide: step 2/2. The sequence is that of Phosphoribosylformylglycinamidine cyclo-ligase from Shewanella sp. (strain MR-7).